We begin with the raw amino-acid sequence, 105 residues long: UPF0145 protein Sala_0338 (105 aa).

This sequence belongs to the UPF0145 family.

The protein is UPF0145 protein Sala_0338 of Sphingopyxis alaskensis (strain DSM 13593 / LMG 18877 / RB2256) (Sphingomonas alaskensis).